The primary structure comprises 122 residues: Large ribosomal subunit protein uL18 (122 aa).

It belongs to the universal ribosomal protein uL18 family. As to quaternary structure, part of the 50S ribosomal subunit; part of the 5S rRNA/L5/L18/L25 subcomplex. Contacts the 5S and 23S rRNAs.

Functionally, this is one of the proteins that bind and probably mediate the attachment of the 5S RNA into the large ribosomal subunit, where it forms part of the central protuberance. The sequence is that of Large ribosomal subunit protein uL18 from Desulforamulus reducens (strain ATCC BAA-1160 / DSM 100696 / MI-1) (Desulfotomaculum reducens).